Reading from the N-terminus, the 447-residue chain is Serine/threonine-protein phosphatase 2A 55 kDa regulatory subunit B alpha isoform (447 aa).

The residue at position 2 (Ala-2) is an N-acetylalanine. WD repeat units follow at residues 11 to 80 (QWCF…FQSH), 94 to 174 (EKIN…IFAN), 175 to 218 (AHTY…VDIK), 227 to 270 (EVIT…KLFE), 288 to 325 (ISDV…TYQV), 347 to 381 (ECCW…TLEA), and 414 to 446 (DFNK…QDKV).

It belongs to the phosphatase 2A regulatory subunit B family. PP2A consists of a common heterodimeric core enzyme, composed of a 36 kDa catalytic subunit (subunit C) and a 65 kDa constant regulatory subunit (PR65 or subunit A), that associates with a variety of regulatory subunits. Proteins that associate with the core dimer include three families of regulatory subunits B (the R2/B/PR55/B55, R3/B''/PR72/PR130/PR59 and R5/B'/B56 families), the 48 kDa variable regulatory subunit, viral proteins, and cell signaling molecules. Interacts with the PP2A C catalytic subunit PPP2CA. Interacts with the PP2A A subunit PPP2R1A. Found in a complex with at least ARL2, PPP2CB, PPP2R1A, PPP2R2A, PPP2R5E and TBCD. Interacts with MFHAS1; the interaction is direct. Interacts with PABIR1/FAM122A (via its N-terminus); the interaction is direct and inhibits PP2A activity. Interacts with ARPP19; the interaction is direct and inhibits PP2A activity. Interacts with CRTC3. In terms of tissue distribution, brain.

Functionally, substrate-recognition subunit of protein phosphatase 2A (PP2A) that plays a key role in cell cycle by controlling mitosis entry and exit. Involved in chromosome clustering during late mitosis by mediating dephosphorylation of MKI67. Essential for serine/threonine-protein phosphatase 2A-mediated dephosphorylation of WEE1, preventing its ubiquitin-mediated proteolysis, increasing WEE1 protein levels, and promoting the G2/M checkpoint. This Rattus norvegicus (Rat) protein is Serine/threonine-protein phosphatase 2A 55 kDa regulatory subunit B alpha isoform (Ppp2r2a).